The sequence spans 299 residues: Protease HtpX homolog (299 aa).

2 helical membrane-spanning segments follow: residues 14-34 (IVLLIVFFMLLAAIGAAVGYL) and 39-59 (LVGGMAIALIIGFIYAFSMIF). A Zn(2+)-binding site is contributed by H143. Residue E144 is part of the active site. Residue H147 coordinates Zn(2+). Helical transmembrane passes span 158-178 (IAVALASAVTLISSIGGRMMW) and 198-218 (IILLIFSLLAIILAPLAASLV). E227 contributes to the Zn(2+) binding site.

The protein belongs to the peptidase M48B family. The cofactor is Zn(2+).

The protein localises to the cell membrane. The polypeptide is Protease HtpX homolog (Streptococcus mutans serotype c (strain ATCC 700610 / UA159)).